Reading from the N-terminus, the 494-residue chain is Protein nucleotidyltransferase YdiU (494 aa).

The ATP site is built by Gly-90, Gly-92, Arg-93, Lys-113, Asp-125, Gly-126, Arg-176, and Arg-183. The active-site Proton acceptor is the Asp-252. Asn-253 and Asp-262 together coordinate Mg(2+). Position 262 (Asp-262) interacts with ATP.

It belongs to the SELO family. Mg(2+) serves as cofactor. It depends on Mn(2+) as a cofactor.

It catalyses the reaction L-seryl-[protein] + ATP = 3-O-(5'-adenylyl)-L-seryl-[protein] + diphosphate. The catalysed reaction is L-threonyl-[protein] + ATP = 3-O-(5'-adenylyl)-L-threonyl-[protein] + diphosphate. The enzyme catalyses L-tyrosyl-[protein] + ATP = O-(5'-adenylyl)-L-tyrosyl-[protein] + diphosphate. It carries out the reaction L-histidyl-[protein] + UTP = N(tele)-(5'-uridylyl)-L-histidyl-[protein] + diphosphate. It catalyses the reaction L-seryl-[protein] + UTP = O-(5'-uridylyl)-L-seryl-[protein] + diphosphate. The catalysed reaction is L-tyrosyl-[protein] + UTP = O-(5'-uridylyl)-L-tyrosyl-[protein] + diphosphate. Functionally, nucleotidyltransferase involved in the post-translational modification of proteins. It can catalyze the addition of adenosine monophosphate (AMP) or uridine monophosphate (UMP) to a protein, resulting in modifications known as AMPylation and UMPylation. The protein is Protein nucleotidyltransferase YdiU of Alkalilimnicola ehrlichii (strain ATCC BAA-1101 / DSM 17681 / MLHE-1).